The primary structure comprises 241 residues: Pyridoxine 5'-phosphate synthase (241 aa).

Position 7 (Asn-7) interacts with 3-amino-2-oxopropyl phosphate. A 1-deoxy-D-xylulose 5-phosphate-binding site is contributed by 9–10 (DH). Arg-18 provides a ligand contact to 3-amino-2-oxopropyl phosphate. His-43 serves as the catalytic Proton acceptor. Arg-45 and His-50 together coordinate 1-deoxy-D-xylulose 5-phosphate. Glu-70 serves as the catalytic Proton acceptor. Thr-100 is a binding site for 1-deoxy-D-xylulose 5-phosphate. The Proton donor role is filled by His-191. 3-amino-2-oxopropyl phosphate-binding positions include Gly-192 and 213–214 (GH).

The protein belongs to the PNP synthase family. In terms of assembly, homooctamer; tetramer of dimers.

The protein resides in the cytoplasm. It catalyses the reaction 3-amino-2-oxopropyl phosphate + 1-deoxy-D-xylulose 5-phosphate = pyridoxine 5'-phosphate + phosphate + 2 H2O + H(+). It participates in cofactor biosynthesis; pyridoxine 5'-phosphate biosynthesis; pyridoxine 5'-phosphate from D-erythrose 4-phosphate: step 5/5. In terms of biological role, catalyzes the complicated ring closure reaction between the two acyclic compounds 1-deoxy-D-xylulose-5-phosphate (DXP) and 3-amino-2-oxopropyl phosphate (1-amino-acetone-3-phosphate or AAP) to form pyridoxine 5'-phosphate (PNP) and inorganic phosphate. This chain is Pyridoxine 5'-phosphate synthase, found in Nitrosospira multiformis (strain ATCC 25196 / NCIMB 11849 / C 71).